The following is a 581-amino-acid chain: NADH-quinone oxidoreductase subunit C/D (581 aa).

An NADH dehydrogenase I subunit C region spans residues 1–172; sequence MSGTDLVSEL…PLFNMTAALF (172 aa). Residues 196 to 581 are NADH dehydrogenase I subunit D; the sequence is ELMILNYGPH…IDYVMSDVDR (386 aa).

In the N-terminal section; belongs to the complex I 30 kDa subunit family. The protein in the C-terminal section; belongs to the complex I 49 kDa subunit family. As to quaternary structure, NDH-1 is composed of 13 different subunits. Subunits NuoB, CD, E, F, and G constitute the peripheral sector of the complex.

It is found in the cell inner membrane. It catalyses the reaction a quinone + NADH + 5 H(+)(in) = a quinol + NAD(+) + 4 H(+)(out). Functionally, NDH-1 shuttles electrons from NADH, via FMN and iron-sulfur (Fe-S) centers, to quinones in the respiratory chain. The immediate electron acceptor for the enzyme in this species is believed to be ubiquinone. Couples the redox reaction to proton translocation (for every two electrons transferred, four hydrogen ions are translocated across the cytoplasmic membrane), and thus conserves the redox energy in a proton gradient. This is NADH-quinone oxidoreductase subunit C/D from Rhodopseudomonas palustris (strain BisB5).